A 103-amino-acid chain; its full sequence is MQNQRIRIRLKGFDHRLIDQSTAEIVETAKRTGAQVRGPIPLPTRKERYTILISPHVNKDARDQYELRTHKRLVDIVEPTEKTVDALMRLDLAAGVDVQISLG.

Belongs to the universal ribosomal protein uS10 family. In terms of assembly, part of the 30S ribosomal subunit.

In terms of biological role, involved in the binding of tRNA to the ribosomes. In Shewanella baltica (strain OS223), this protein is Small ribosomal subunit protein uS10.